The primary structure comprises 182 residues: uncharacterized protein (182 aa).

The signal sequence occupies residues 1-26; the sequence is MIRALCTIVLIAAGVAVALYLSLVYG. Residues 68–90 form a disordered region; that stretch reads YTERPYPVSSTQSPTTTQSPTTT. A compositionally biased stretch (low complexity) spans 74 to 90; the sequence is PVSSTQSPTTTQSPTTT.

This is an uncharacterized protein from Dryophytes versicolor (chameleon treefrog).